The sequence spans 78 residues: Probable cytochrome c oxidase subunit 6B (78 aa).

The CHCH domain occupies 21-64 (TKHCWANYVDYYGCVKHYNGDNSKCQTFFNSMNSLCPAAWISEW). A Cx9C motif motif is present at residues 24 to 34 (CWANYVDYYGC). Intrachain disulfides connect cysteine 24/cysteine 56 and cysteine 34/cysteine 45. The Cx10C motif motif lies at 45-56 (CQTFFNSMNSLC).

This sequence belongs to the cytochrome c oxidase subunit 6B family. Component of the cytochrome c oxidase (complex IV, CIV), a multisubunit enzyme composed of a catalytic core of 3 subunits and several supernumerary subunits. The complex exists as a monomer or a dimer and forms supercomplexes (SCs) in the inner mitochondrial membrane with ubiquinol-cytochrome c oxidoreductase (cytochrome b-c1 complex, complex III, CIII).

It localises to the mitochondrion inner membrane. It participates in energy metabolism; oxidative phosphorylation. Component of the cytochrome c oxidase, the last enzyme in the mitochondrial electron transport chain which drives oxidative phosphorylation. The respiratory chain contains 3 multisubunit complexes succinate dehydrogenase (complex II, CII), ubiquinol-cytochrome c oxidoreductase (cytochrome b-c1 complex, complex III, CIII) and cytochrome c oxidase (complex IV, CIV), that cooperate to transfer electrons derived from NADH and succinate to molecular oxygen, creating an electrochemical gradient over the inner membrane that drives transmembrane transport and the ATP synthase. Cytochrome c oxidase is the component of the respiratory chain that catalyzes the reduction of oxygen to water. Electrons originating from reduced cytochrome c in the intermembrane space (IMS) are transferred via the dinuclear copper A center (CU(A)) of subunit 2 and heme A of subunit 1 to the active site in subunit 1, a binuclear center (BNC) formed by heme A3 and copper B (CU(B)). The BNC reduces molecular oxygen to 2 water molecules using 4 electrons from cytochrome c in the IMS and 4 protons from the mitochondrial matrix. This Dictyostelium discoideum (Social amoeba) protein is Probable cytochrome c oxidase subunit 6B.